Consider the following 130-residue polypeptide: Large ribosomal subunit protein bL19 (130 aa).

It belongs to the bacterial ribosomal protein bL19 family.

In terms of biological role, this protein is located at the 30S-50S ribosomal subunit interface and may play a role in the structure and function of the aminoacyl-tRNA binding site. In Mycoplasma mycoides subsp. mycoides SC (strain CCUG 32753 / NCTC 10114 / PG1), this protein is Large ribosomal subunit protein bL19.